The primary structure comprises 93 residues: Large ribosomal subunit protein uL23 (93 aa).

The protein belongs to the universal ribosomal protein uL23 family. Part of the 50S ribosomal subunit. Contacts protein L29, and trigger factor when it is bound to the ribosome.

In terms of biological role, one of the early assembly proteins it binds 23S rRNA. One of the proteins that surrounds the polypeptide exit tunnel on the outside of the ribosome. Forms the main docking site for trigger factor binding to the ribosome. The polypeptide is Large ribosomal subunit protein uL23 (Aliarcobacter butzleri (strain RM4018) (Arcobacter butzleri)).